Reading from the N-terminus, the 427-residue chain is Enolase (427 aa).

Glutamine 163 provides a ligand contact to (2R)-2-phosphoglycerate. The active-site Proton donor is glutamate 205. Mg(2+) contacts are provided by aspartate 242, glutamate 285, and aspartate 312. Positions 337, 366, 367, and 388 each coordinate (2R)-2-phosphoglycerate. Lysine 337 acts as the Proton acceptor in catalysis.

The protein belongs to the enolase family. Mg(2+) serves as cofactor.

Its subcellular location is the cytoplasm. It is found in the secreted. It localises to the cell surface. The enzyme catalyses (2R)-2-phosphoglycerate = phosphoenolpyruvate + H2O. It participates in carbohydrate degradation; glycolysis; pyruvate from D-glyceraldehyde 3-phosphate: step 4/5. In terms of biological role, catalyzes the reversible conversion of 2-phosphoglycerate (2-PG) into phosphoenolpyruvate (PEP). It is essential for the degradation of carbohydrates via glycolysis. The protein is Enolase of Rhodopseudomonas palustris (strain BisA53).